Reading from the N-terminus, the 371-residue chain is E3 ubiquitin-protein ligase RHF1A (371 aa).

An RING-type; atypical zinc finger spans residues 46 to 87 (CSICLEPFTLQDPSTVTSCKHEYHLQCIIEWSQRSKECPICW). 2 disordered regions span residues 199–254 (HQNS…SSLP) and 348–371 (EANS…GETC). A compositionally biased stretch (polar residues) spans 200–225 (QNSNPCPSPGSMTPSPVSGHSSIPAD). Residues 226-252 (SNNGSRISPGPSPSRSSQSPKSPEASS) show a composition bias toward low complexity.

In terms of assembly, interacts with KRP6. As to expression, expressed in stems, flowers, green siliques, cauline leaves, seeds and roots.

The enzyme catalyses S-ubiquitinyl-[E2 ubiquitin-conjugating enzyme]-L-cysteine + [acceptor protein]-L-lysine = [E2 ubiquitin-conjugating enzyme]-L-cysteine + N(6)-ubiquitinyl-[acceptor protein]-L-lysine.. The protein operates within protein modification; protein ubiquitination. Functionally, E3 ubiquitin-protein ligase involved in the positive regulation of the gametogenesis progression. Mediates the proteasomal degradation of KRP6, a cyclin-dependent kinase inhibitor which accumulates during meiosis and blocks the progression of subsequent mitoses during gametophyte development. Functions in association with RHF2A. Possesses E3 ubiquitin-protein ligase activity when associated with the E2 enzyme UBC8 in vitro. The chain is E3 ubiquitin-protein ligase RHF1A from Arabidopsis thaliana (Mouse-ear cress).